We begin with the raw amino-acid sequence, 314 residues long: Porphobilinogen deaminase (314 aa).

Position 242 is an S-(dipyrrolylmethanemethyl)cysteine (Cys-242).

The protein belongs to the HMBS family. In terms of assembly, monomer. Requires dipyrromethane as cofactor.

The catalysed reaction is 4 porphobilinogen + H2O = hydroxymethylbilane + 4 NH4(+). Its pathway is porphyrin-containing compound metabolism; protoporphyrin-IX biosynthesis; coproporphyrinogen-III from 5-aminolevulinate: step 2/4. Functionally, tetrapolymerization of the monopyrrole PBG into the hydroxymethylbilane pre-uroporphyrinogen in several discrete steps. This is Porphobilinogen deaminase (hemC) from Buchnera aphidicola subsp. Acyrthosiphon pisum (strain APS) (Acyrthosiphon pisum symbiotic bacterium).